A 264-amino-acid chain; its full sequence is S-adenosylmethionine decarboxylase proenzyme (264 aa).

Residue S112 is the Schiff-base intermediate with substrate; via pyruvic acid of the active site. The residue at position 112 (S112) is a Pyruvic acid (Ser); by autocatalysis. Residue H117 is the Proton acceptor; for processing activity of the active site. The active-site Proton donor; for catalytic activity is C140.

Belongs to the prokaryotic AdoMetDC family. Type 2 subfamily. In terms of assembly, heterooctamer of four alpha and four beta chains arranged as a tetramer of alpha/beta heterodimers. Pyruvate is required as a cofactor. Is synthesized initially as an inactive proenzyme. Formation of the active enzyme involves a self-maturation process in which the active site pyruvoyl group is generated from an internal serine residue via an autocatalytic post-translational modification. Two non-identical subunits are generated from the proenzyme in this reaction, and the pyruvate is formed at the N-terminus of the alpha chain, which is derived from the carboxyl end of the proenzyme. The post-translation cleavage follows an unusual pathway, termed non-hydrolytic serinolysis, in which the side chain hydroxyl group of the serine supplies its oxygen atom to form the C-terminus of the beta chain, while the remainder of the serine residue undergoes an oxidative deamination to produce ammonia and the pyruvoyl group blocking the N-terminus of the alpha chain.

The catalysed reaction is S-adenosyl-L-methionine + H(+) = S-adenosyl 3-(methylsulfanyl)propylamine + CO2. The protein operates within amine and polyamine biosynthesis; S-adenosylmethioninamine biosynthesis; S-adenosylmethioninamine from S-adenosyl-L-methionine: step 1/1. Functionally, catalyzes the decarboxylation of S-adenosylmethionine to S-adenosylmethioninamine (dcAdoMet), the propylamine donor required for the synthesis of the polyamines spermine and spermidine from the diamine putrescine. The chain is S-adenosylmethionine decarboxylase proenzyme from Klebsiella pneumoniae subsp. pneumoniae (strain ATCC 700721 / MGH 78578).